The following is a 147-amino-acid chain: Protein BUD31 homolog (147 aa).

The Nuclear localization signal motif lies at 8–12 (RRVRK).

It belongs to the BUD31 (G10) family. As to quaternary structure, identified in the spliceosome C complex.

It is found in the nucleus. Functionally, involved in pre-mRNA splicing process. The protein is Protein BUD31 homolog of Caenorhabditis elegans.